The sequence spans 102 residues: Vesicle-associated membrane protein 5 (102 aa).

Residues 1-72 (MAGKELERCQ…RWENIRCRVY (72 aa)) lie on the Cytoplasmic side of the membrane. Positions 5–65 (ELERCQRQAD…KTLAQQKRWE (61 aa)) constitute a v-SNARE coiled-coil homology domain. Residues S41, S48, and S49 each carry the phosphoserine modification. A helical; Anchor for type IV membrane protein membrane pass occupies residues 73 to 93 (LGLAVAGGLLLILVVLLVIFL). Topologically, residues 94-102 (PSGEDSSKP) are vesicular.

This sequence belongs to the synaptobrevin family.

The protein localises to the cell membrane. It localises to the endomembrane system. It is found in the golgi apparatus. Its subcellular location is the trans-Golgi network membrane. In terms of biological role, may participate in trafficking events that are associated with myogenesis, such as myoblast fusion and/or GLUT4 trafficking. The polypeptide is Vesicle-associated membrane protein 5 (Vamp5) (Rattus norvegicus (Rat)).